A 382-amino-acid polypeptide reads, in one-letter code: Mannitol-1-phosphate 5-dehydrogenase (382 aa).

3 to 14 (ALHFGAGNIGRG) contacts NAD(+). The residue at position 269 (K269) is an N6-acetyllysine.

This sequence belongs to the mannitol dehydrogenase family.

The catalysed reaction is D-mannitol 1-phosphate + NAD(+) = beta-D-fructose 6-phosphate + NADH + H(+). The sequence is that of Mannitol-1-phosphate 5-dehydrogenase from Escherichia coli O9:H4 (strain HS).